The primary structure comprises 208 residues: Type 4 adapter protein LvgA (208 aa).

A disordered region spans residues 184 to 208 (GYGYPPESPRENYKHPVSSATTARK).

In terms of assembly, the T4BSS is a complex nanomachine composed of several subcomplexes. This subunit is part of the Type IV Coupling Complex (T4CC), a subcomplex composed of the DotLMNYZ core and the IcmSW-LvgA adapter subunits, linked by the C-terminal tail of DotL.

It localises to the cytoplasm. Component of the Dot/Icm type IVB secretion system (T4BSS), which is used to inject bacterial effector proteins into eukaryotic host cells. Part of a subcomplex which recruits effector proteins and delivers them to the core transmembrane subcomplex. Is a critical subunit for binding a subset of effector proteins. Recognizes more than one type of binding motif. May be a critical factor that confers host specificity. Necessary for full virulence of the bacterium in guinea pigs and presumably humans. The protein is Type 4 adapter protein LvgA of Legionella pneumophila.